A 284-amino-acid chain; its full sequence is tRNA uridine(34) hydroxylase (284 aa).

The region spanning 132–226 (AGRPVVMLDT…YFEEVGGAHY (95 aa)) is the Rhodanese domain. Cys-186 (cysteine persulfide intermediate) is an active-site residue.

The protein belongs to the TrhO family.

It catalyses the reaction uridine(34) in tRNA + AH2 + O2 = 5-hydroxyuridine(34) in tRNA + A + H2O. Its function is as follows. Catalyzes oxygen-dependent 5-hydroxyuridine (ho5U) modification at position 34 in tRNAs. The polypeptide is tRNA uridine(34) hydroxylase (Burkholderia cenocepacia (strain HI2424)).